Here is a 105-residue protein sequence, read N- to C-terminus: MANKIKKGDTVVVLSGKDKGKTGEVTQALPKDGKVVVAGVNVITRHRKPTQQNPQGGLERKEAPLFASKVALADPKTGKPTRVRFETRDGKKVRVAVKSGETING.

This sequence belongs to the universal ribosomal protein uL24 family. In terms of assembly, part of the 50S ribosomal subunit.

Its function is as follows. One of two assembly initiator proteins, it binds directly to the 5'-end of the 23S rRNA, where it nucleates assembly of the 50S subunit. In terms of biological role, one of the proteins that surrounds the polypeptide exit tunnel on the outside of the subunit. The sequence is that of Large ribosomal subunit protein uL24 from Sphingopyxis alaskensis (strain DSM 13593 / LMG 18877 / RB2256) (Sphingomonas alaskensis).